The primary structure comprises 287 residues: 2-dehydro-3-deoxyphosphooctonate aldolase (287 aa).

Belongs to the KdsA family.

It localises to the cytoplasm. It carries out the reaction D-arabinose 5-phosphate + phosphoenolpyruvate + H2O = 3-deoxy-alpha-D-manno-2-octulosonate-8-phosphate + phosphate. It functions in the pathway carbohydrate biosynthesis; 3-deoxy-D-manno-octulosonate biosynthesis; 3-deoxy-D-manno-octulosonate from D-ribulose 5-phosphate: step 2/3. Its pathway is bacterial outer membrane biogenesis; lipopolysaccharide biosynthesis. This chain is 2-dehydro-3-deoxyphosphooctonate aldolase, found in Bradyrhizobium sp. (strain ORS 278).